A 336-amino-acid polypeptide reads, in one-letter code: Fructokinase-2 (336 aa).

Belongs to the carbohydrate kinase PfkB family. In terms of tissue distribution, expressed in stem, sheaths, anthers, and panicles (at protein level).

It catalyses the reaction D-fructose + ATP = D-fructose 6-phosphate + ADP + H(+). It functions in the pathway glycan biosynthesis; starch biosynthesis. Its activity is regulated as follows. Strongly inhibited at high fructose concentration. Its function is as follows. May play an important role in maintaining the flux of carbon towards starch formation in endosperm. May also be involved in a sugar-sensing pathway. This chain is Fructokinase-2 (FRK2), found in Oryza sativa subsp. japonica (Rice).